We begin with the raw amino-acid sequence, 529 residues long: Cytochrome P450 monooxygenase CLM2 (529 aa).

The chain crosses the membrane as a helical span at residues 2-19; that stretch reads LLIIVVLVGTLIYFLSFH. N-linked (GlcNAc...) asparagine glycans are attached at residues N244 and N281. C438 is a heme binding site.

Belongs to the cytochrome P450 family. The cofactor is heme.

Its subcellular location is the membrane. The catalysed reaction is (-)-longiborneol + reduced [NADPH--hemoprotein reductase] + O2 = culmorin + oxidized [NADPH--hemoprotein reductase] + H2O + H(+). The protein operates within mycotoxin biosynthesis. In terms of biological role, cytochrome P450 monooxygenase involved in the biosynthesis of culmorin, a tricyclic sesquiterpene diol reported to have antifungal activity and some phytotoxicity to wheat coleoptile tissue, contributing to Fusarium head blight disease. The terpene cyclase CLM1 is responsible for the cyclization of farnesyl diphosphate into the intermediate longiborneol. Longiborneol is then hydroxylated in a regio- and endo-stereoselective manner at position C-11 by the cytochrome P450 monooxygenase CLM2 to produce culmorin. Additional non-specific oxygenases are also able to hydroxylate longiborneol at other sites than C-11 leading to 3-hydroxylongiborneol, 5-hydroxylongiborneol, 12-hydroxylongiborneol and 15-hydroxylongiborneol. Moreover, another oxygenase capable of installing a C-11 exo-hydroxy group in longiborneol can also yield 11-epi-acetylculmorin. The production of these longiborneol derivatives is dwarfed by the high abundance of culmorin, suggesting that CLM2 displays superior enzymatic activity to the unidentified, possibly promiscuous, additional oxygenases. This is Cytochrome P450 monooxygenase CLM2 from Gibberella zeae (strain ATCC MYA-4620 / CBS 123657 / FGSC 9075 / NRRL 31084 / PH-1) (Wheat head blight fungus).